We begin with the raw amino-acid sequence, 239 residues long: Purine nucleoside phosphorylase DeoD-type (239 aa).

His-5 is an a purine D-ribonucleoside binding site. Phosphate contacts are provided by residues Gly-21, Arg-25, Arg-44, and Arg-88–Ser-91. Residues Glu-180–Glu-182 and Ser-204–Asp-205 each bind a purine D-ribonucleoside. Asp-205 serves as the catalytic Proton donor.

It belongs to the PNP/UDP phosphorylase family. As to quaternary structure, homohexamer; trimer of homodimers.

It catalyses the reaction a purine D-ribonucleoside + phosphate = a purine nucleobase + alpha-D-ribose 1-phosphate. The catalysed reaction is a purine 2'-deoxy-D-ribonucleoside + phosphate = a purine nucleobase + 2-deoxy-alpha-D-ribose 1-phosphate. Its function is as follows. Catalyzes the reversible phosphorolytic breakdown of the N-glycosidic bond in the beta-(deoxy)ribonucleoside molecules, with the formation of the corresponding free purine bases and pentose-1-phosphate. This is Purine nucleoside phosphorylase DeoD-type from Yersinia pseudotuberculosis serotype O:1b (strain IP 31758).